The following is a 934-amino-acid chain: Rab GTPase-activating protein tbc-11 (934 aa).

A PID domain is found at 16 to 134 (VQYLGCSQLV…SKAETAAKAL (119 aa)). Residues 337 to 383 (FISLESDSDRKRSKQNLGKSPSRMPTQLLHPTGDDESDCDEPLLSGS) form a disordered region. A compositionally biased stretch (polar residues) spans 351–361 (QNLGKSPSRMP). Residues 422-612 (GIPDKLRGRV…FILDLFLSQG (191 aa)) enclose the Rab-GAP TBC domain. 2 coiled-coil regions span residues 727–800 (KIEL…YKKL) and 861–895 (LEER…LTHQ).

Functionally, rab GTPase activating protein for the small GTPases rab-6.1 and rab-6.2. Probably acts through rab-6.1 and rab-6.2 to play a role in microRNA-mediated gene silencing in different tissue types. Required for seam cell division and alae formation. This is Rab GTPase-activating protein tbc-11 from Caenorhabditis elegans.